Here is a 425-residue protein sequence, read N- to C-terminus: Putative integrase/recombinase y4rF (425 aa).

Residues 123 to 210 (DPDALLLASF…HIRTFLRFLC (88 aa)) enclose the Core-binding (CB) domain. In terms of domain architecture, Tyr recombinase spans 233 to 418 (HLPPRLAWGD…AASQLAEVAL (186 aa)). Catalysis depends on residues R273, K298, H370, R373, and H396. Y405 functions as the O-(3'-phospho-DNA)-tyrosine intermediate in the catalytic mechanism.

Belongs to the 'phage' integrase family.

The sequence is that of Putative integrase/recombinase y4rF from Sinorhizobium fredii (strain NBRC 101917 / NGR234).